The chain runs to 107 residues: Insulin (107 aa).

The first 24 residues, 1–24 (MALWIRSLPLLALLVFSGPGTSYA), serve as a signal peptide directing secretion. Cystine bridges form between C31/C93, C43/C106, and C92/C97. Residues 57-84 (DVEQPLVSSPLRGEAGVLPFQQEEYEKV) constitute a propeptide, c peptide.

It belongs to the insulin family. In terms of assembly, heterodimer of a B chain and an A chain linked by two disulfide bonds.

Its subcellular location is the secreted. Insulin decreases blood glucose concentration. It increases cell permeability to monosaccharides, amino acids and fatty acids. It accelerates glycolysis, the pentose phosphate cycle, and glycogen synthesis in liver. This Gallus gallus (Chicken) protein is Insulin (INS).